We begin with the raw amino-acid sequence, 327 residues long: Aspartate carbamoyltransferase catalytic subunit (327 aa).

Positions 54 and 55 each coordinate carbamoyl phosphate. An L-aspartate-binding site is contributed by Lys-82. Arg-104, His-134, and Gln-137 together coordinate carbamoyl phosphate. Residues Arg-177 and Arg-232 each contribute to the L-aspartate site. Positions 280 and 281 each coordinate carbamoyl phosphate.

This sequence belongs to the aspartate/ornithine carbamoyltransferase superfamily. ATCase family. Heterododecamer (2C3:3R2) of six catalytic PyrB chains organized as two trimers (C3), and six regulatory PyrI chains organized as three dimers (R2).

It carries out the reaction carbamoyl phosphate + L-aspartate = N-carbamoyl-L-aspartate + phosphate + H(+). It functions in the pathway pyrimidine metabolism; UMP biosynthesis via de novo pathway; (S)-dihydroorotate from bicarbonate: step 2/3. Catalyzes the condensation of carbamoyl phosphate and aspartate to form carbamoyl aspartate and inorganic phosphate, the committed step in the de novo pyrimidine nucleotide biosynthesis pathway. This is Aspartate carbamoyltransferase catalytic subunit from Micrococcus luteus (strain ATCC 4698 / DSM 20030 / JCM 1464 / CCM 169 / CCUG 5858 / IAM 1056 / NBRC 3333 / NCIMB 9278 / NCTC 2665 / VKM Ac-2230) (Micrococcus lysodeikticus).